The sequence spans 314 residues: Olfactory receptor 5P51 (314 aa).

Topologically, residues 1–28 (MAFLEDGNHTAVTEFVLFGLTDDPVLRV) are extracellular. An N-linked (GlcNAc...) asparagine glycan is attached at N8. A helical transmembrane segment spans residues 29–49 (ILFIIFLCIYLVNVSGNLSTI). Residues 50–57 (LLIRVSSQ) lie on the Cytoplasmic side of the membrane. Residues 58–78 (LHHPMYFFLSHLASVDVGYSS) form a helical membrane-spanning segment. Residues 79–102 (TVTPKMLANFLLERSTISYLGCTI) are Extracellular-facing. C100 and C192 are disulfide-bonded. Residues 103–123 (QLFSGAFVGTLECFLLATMAY) traverse the membrane as a helical segment. At 124 to 136 (DRFIAICNPLLYS) the chain is on the cytoplasmic side. Residues 137–157 (TKMSTQVCIQLLVGSYIGGFL) form a helical membrane-spanning segment. Residues 158–199 (NASSFLLSFFPLLFCGPNRVNHYSCDLTPLIELSCSGSNVPI) lie on the Extracellular side of the membrane. A helical transmembrane segment spans residues 200-220 (VPASFCSAFVIIVTVSVIAIS). At 221–240 (YTYILITILKMRSTEGRQKA) the chain is on the cytoplasmic side. The helical transmembrane segment at 241–261 (FSTCTSHLTAVTLYYGTVTFI) threads the bilayer. Residues 262-274 (YVMPKSSYSTDQN) lie on the Extracellular side of the membrane. The helical transmembrane segment at 275–295 (KVVSVFYTVVIPMLNPIIYSL) threads the bilayer. Over 296–314 (RNNEIKGALKRQLARKIFS) the chain is Cytoplasmic.

This sequence belongs to the G-protein coupled receptor 1 family.

It is found in the cell membrane. Potential odorant receptor. The chain is Olfactory receptor 5P51 from Mus musculus (Mouse).